Reading from the N-terminus, the 282-residue chain is Pantothenate synthetase (282 aa).

Residue 30-37 (MGYLHEGH) participates in ATP binding. H37 (proton donor) is an active-site residue. Residue Q61 participates in (R)-pantoate binding. Residue Q61 coordinates beta-alanine. An ATP-binding site is contributed by 147 to 150 (GQKD). Residue Q153 participates in (R)-pantoate binding. ATP-binding positions include V176 and 184-187 (LSSR).

It belongs to the pantothenate synthetase family. In terms of assembly, homodimer.

It is found in the cytoplasm. The enzyme catalyses (R)-pantoate + beta-alanine + ATP = (R)-pantothenate + AMP + diphosphate + H(+). Its pathway is cofactor biosynthesis; (R)-pantothenate biosynthesis; (R)-pantothenate from (R)-pantoate and beta-alanine: step 1/1. Functionally, catalyzes the condensation of pantoate with beta-alanine in an ATP-dependent reaction via a pantoyl-adenylate intermediate. This is Pantothenate synthetase from Desulfitobacterium hafniense (strain DSM 10664 / DCB-2).